The primary structure comprises 500 residues: Cysteine--tRNA ligase (500 aa).

Cys-30 contacts Zn(2+). The 'HIGH' region motif lies at 32–42 (PTVYDYAHIGN). The Zn(2+) site is built by Cys-224, His-263, and Glu-267. The 'KMSKS' region signature appears at 296-300 (KMSKS). Lys-299 is an ATP binding site.

It belongs to the class-I aminoacyl-tRNA synthetase family. In terms of assembly, monomer. Zn(2+) is required as a cofactor.

It localises to the cytoplasm. The enzyme catalyses tRNA(Cys) + L-cysteine + ATP = L-cysteinyl-tRNA(Cys) + AMP + diphosphate. In Bartonella bacilliformis (strain ATCC 35685 / KC583 / Herrer 020/F12,63), this protein is Cysteine--tRNA ligase.